Here is a 557-residue protein sequence, read N- to C-terminus: Inositol-3-phosphate synthase 1 (557 aa).

NAD(+)-binding residues include G67, G68, N69, N70, D141, S177, V178, Q188, R191, T228, A229, N230, T231, G278, S279, D303, S306, N337, N338, D339, and K352. At S279 the chain carries Phosphoserine. Position 357 is a phosphoserine (S357). Positions 390, 391, 419, and 420 each coordinate NAD(+). S523 carries the phosphoserine modification. Residues 527-557 (CKKGSAPTAPNGCTGDANGHSQAEAPQMPTT) are disordered.

It belongs to the myo-inositol 1-phosphate synthase family. The cofactor is NAD(+). As to expression, expressed in testis (at protein level).

Its subcellular location is the cytoplasm. The catalysed reaction is D-glucose 6-phosphate = 1D-myo-inositol 3-phosphate. Its pathway is polyol metabolism; myo-inositol biosynthesis; myo-inositol from D-glucose 6-phosphate: step 1/2. Key enzyme in myo-inositol biosynthesis pathway that catalyzes the conversion of glucose 6-phosphate to 1-myo-inositol 1-phosphate in a NAD-dependent manner. Rate-limiting enzyme in the synthesis of all inositol-containing compounds. This is Inositol-3-phosphate synthase 1 (ISYNA1) from Bos taurus (Bovine).